The primary structure comprises 877 residues: DNA polymerase I (877 aa).

The region spanning Thr177–Asp270 is the 5'-3' exonuclease domain. Residues Asp302–Ser465 enclose the 3'-5' exonuclease domain.

Belongs to the DNA polymerase type-A family. As to quaternary structure, single-chain monomer with multiple functions.

The catalysed reaction is DNA(n) + a 2'-deoxyribonucleoside 5'-triphosphate = DNA(n+1) + diphosphate. Its function is as follows. In addition to polymerase activity, this DNA polymerase exhibits 3'-5' and 5'-3' exonuclease activity. In Streptococcus pneumoniae (strain ATCC BAA-255 / R6), this protein is DNA polymerase I (polA).